The primary structure comprises 102 residues: Large ribosomal subunit protein uL24 (102 aa).

The protein belongs to the universal ribosomal protein uL24 family. As to quaternary structure, part of the 50S ribosomal subunit.

Functionally, one of two assembly initiator proteins, it binds directly to the 5'-end of the 23S rRNA, where it nucleates assembly of the 50S subunit. In terms of biological role, one of the proteins that surrounds the polypeptide exit tunnel on the outside of the subunit. The polypeptide is Large ribosomal subunit protein uL24 (Burkholderia mallei (strain NCTC 10229)).